Reading from the N-terminus, the 745-residue chain is Ankyrin repeat and protein kinase domain-containing protein 1 (745 aa).

Residues 34-301 (EEEWHLVASG…NVAVETDMLL (268 aa)) form the Protein kinase domain. ATP-binding positions include 40-48 (VASGGFSKV) and K63. D157 (proton acceptor) is an active-site residue. ANK repeat units follow at residues 369–398 (NRVT…DVDC), 402–431 (SGYT…DTNL), 435–464 (DGWA…LVNA), 468–497 (EGWT…DLSP), 501–530 (EGKT…ELDA), 534–563 (NLRT…LPDA), 567–596 (SGYS…SLEL), 600–629 (QGWT…DLDA), 633–662 (MQWT…NPNA), 666–695 (SGWT…DIHA), and 699–728 (VGWT…QVDV).

It belongs to the protein kinase superfamily. TKL Ser/Thr protein kinase family.

The catalysed reaction is L-seryl-[protein] + ATP = O-phospho-L-seryl-[protein] + ADP + H(+). It carries out the reaction L-threonyl-[protein] + ATP = O-phospho-L-threonyl-[protein] + ADP + H(+). The sequence is that of Ankyrin repeat and protein kinase domain-containing protein 1 (Ankk1) from Mus musculus (Mouse).